Reading from the N-terminus, the 796-residue chain is Phenylalanine--tRNA ligase beta subunit (796 aa).

Positions 39-149 constitute a tRNA-binding domain; it reads SAALKSFRVA…GDAPLGTTFA (111 aa). Residues 398–470 form the B5 domain; the sequence is LARKALAYDP…RVHGLDAVPS (73 aa). The Mg(2+) site is built by D448, D454, E457, and E458. One can recognise an FDX-ACB domain in the interval 703 to 795; the sequence is PALQAVTRDF…AAGKLGAELR (93 aa).

Belongs to the phenylalanyl-tRNA synthetase beta subunit family. Type 1 subfamily. As to quaternary structure, tetramer of two alpha and two beta subunits. Mg(2+) is required as a cofactor.

The protein localises to the cytoplasm. It carries out the reaction tRNA(Phe) + L-phenylalanine + ATP = L-phenylalanyl-tRNA(Phe) + AMP + diphosphate + H(+). The chain is Phenylalanine--tRNA ligase beta subunit from Novosphingobium aromaticivorans (strain ATCC 700278 / DSM 12444 / CCUG 56034 / CIP 105152 / NBRC 16084 / F199).